We begin with the raw amino-acid sequence, 60 residues long: uncharacterized protein (60 aa).

This is an uncharacterized protein from Escherichia coli O157:H7.